The primary structure comprises 317 residues: Zinc finger protein 771 (317 aa).

A Glycyl lysine isopeptide (Lys-Gly) (interchain with G-Cter in SUMO2) cross-link involves residue K33. 8 consecutive C2H2-type zinc fingers follow at residues 63–85 (HACPDCGRAFARRSTLAKHARTH), 91–113 (FACTECGRCFSQKSALTKHGRTH), 119–141 (YQCPECDKRFSAASNLRQHRRRH), 147–169 (YACAHCGRRFAQSSNYAQHLRVH), 175–197 (YACPDCGRAFGGSSCLARHRRTH), 203–225 (YACADCGTRFAQSSALAKHRRVH), 231–253 (HRCAVCGRRFGHRSNLAEHARTH), and 259–281 (YPCTECGRRFRLSSHFIRHRRAH).

The protein belongs to the krueppel C2H2-type zinc-finger protein family.

The protein localises to the nucleus. Its function is as follows. May be involved in transcriptional regulation. The protein is Zinc finger protein 771 (Znf771) of Mus musculus (Mouse).